A 600-amino-acid chain; its full sequence is Glutamine--fructose-6-phosphate aminotransferase [isomerizing] (600 aa).

Cysteine 2 acts as the Nucleophile; for GATase activity in catalysis. Residues 2-217 (CGIVGYIGNE…DEELVIVRRD (216 aa)) enclose the Glutamine amidotransferase type-2 domain. 2 SIS domains span residues 283–422 (IRAA…AAGK) and 452–590 (IARD…VDKP). Residue lysine 595 is the For Fru-6P isomerization activity of the active site.

Homodimer.

It localises to the cytoplasm. It catalyses the reaction D-fructose 6-phosphate + L-glutamine = D-glucosamine 6-phosphate + L-glutamate. Catalyzes the first step in hexosamine metabolism, converting fructose-6P into glucosamine-6P using glutamine as a nitrogen source. The sequence is that of Glutamine--fructose-6-phosphate aminotransferase [isomerizing] from Shouchella clausii (strain KSM-K16) (Alkalihalobacillus clausii).